The primary structure comprises 208 residues: GTP-binding protein Rho1 (208 aa).

19–26 (GDGACGKT) is a GTP binding site. The short motif at 41-49 (YVPTVFDNY) is the Effector region element. GTP contacts are provided by residues 66 to 70 (DTAGQ) and 124 to 127 (CKAD). Residues 188 to 208 (GKQGKSKPKTKSSKKKKCVVL) form a disordered region. A compositionally biased stretch (basic residues) spans 191–208 (GKSKPKTKSSKKKKCVVL). Position 205 is a cysteine methyl ester (Cys205). Cys205 carries the S-geranylgeranyl cysteine lipid modification. A propeptide spans 206–208 (VVL) (removed in mature form).

This sequence belongs to the small GTPase superfamily. Rho family.

Its subcellular location is the cell membrane. This Kluyveromyces lactis (strain ATCC 8585 / CBS 2359 / DSM 70799 / NBRC 1267 / NRRL Y-1140 / WM37) (Yeast) protein is GTP-binding protein Rho1 (RHO1).